Consider the following 466-residue polypeptide: UDP-glycosyltransferase 79 (466 aa).

The active-site Proton acceptor is the histidine 27. Histidine 27 serves as a coordination point for UDP-alpha-D-glucose. Aspartate 120 functions as the Charge relay in the catalytic mechanism. Positions 142, 291, 343, 344, 361, 364, 365, 366, 369, 385, and 386 each coordinate UDP-alpha-D-glucose. Positions 291, 343, 344, and 361 each coordinate UDP. UDP contacts are provided by asparagine 365, serine 366, and glutamate 369.

It belongs to the UDP-glycosyltransferase family.

Functionally, involved in the detoxification of the Fusarium mycotoxin deoxynivalenol by the transfer of glucose from UDP-D-glucose to the hydroxyl group at C-3, forming deoxynivalenol-3-O-beta-D-glucoside. This chain is UDP-glycosyltransferase 79, found in Oryza sativa subsp. japonica (Rice).